The following is an 84-amino-acid chain: Exodeoxyribonuclease 7 small subunit (84 aa).

The protein belongs to the XseB family. As to quaternary structure, heterooligomer composed of large and small subunits.

Its subcellular location is the cytoplasm. The enzyme catalyses Exonucleolytic cleavage in either 5'- to 3'- or 3'- to 5'-direction to yield nucleoside 5'-phosphates.. Bidirectionally degrades single-stranded DNA into large acid-insoluble oligonucleotides, which are then degraded further into small acid-soluble oligonucleotides. The polypeptide is Exodeoxyribonuclease 7 small subunit (Herminiimonas arsenicoxydans).